Here is an 858-residue protein sequence, read N- to C-terminus: Conidiophore development regulator abaA (858 aa).

The disordered stretch occupies residues 1–22 (MSSSLYHPRPVLSSQRYTPSPD). Positions 128-221 (QKDKGGVWRR…QVVKKFFEDL (94 aa)) form a DNA-binding region, TEA. Positions 500–522 (VEHQRKKEKRTKGDDRKNLDRAG) are enriched in basic and acidic residues. Disordered stretches follow at residues 500 to 535 (VEHQ…GDAA) and 792 to 858 (TGAG…AGGW). A Nuclear localization signal motif is present at residues 514–521 (DRKNLDRA). Residues 809 to 822 (SSDQTALWTQSQWA) are compositionally biased toward polar residues.

It belongs to the TEC1 family.

The protein resides in the nucleus. Its function is as follows. AbaA and wetA are pivotal regulators of conidiophore development and conidium maturation. They act individually and together to regulate their own expression and that of numerous other sporulation-specific genes. Binds to the sequence 5'-CATTCY-3', where Y is a pyrimidine, making both major- and minor-groove contacts. Plays a pivotal role in conidiation by regulating cell cycle pathways and other conidiation-related genes. This Gibberella zeae (strain ATCC MYA-4620 / CBS 123657 / FGSC 9075 / NRRL 31084 / PH-1) (Wheat head blight fungus) protein is Conidiophore development regulator abaA.